The following is a 515-amino-acid chain: Putative ammonium transporter 2 (515 aa).

The next 12 helical transmembrane spans lie at Gly-34–Leu-54, Val-72–Gly-92, Gly-124–Val-144, Ser-156–Trp-176, Ala-191–Leu-211, Val-226–Phe-246, Ala-266–Leu-286, Ile-291–Cys-311, Leu-321–Thr-337, Val-346–Phe-366, Phe-381–Leu-401, and Phe-404–Ile-424.

It belongs to the ammonia transporter channel (TC 1.A.11.2) family.

It localises to the membrane. Its function is as follows. Involved in the uptake of ammonia. Implicated in aging. This chain is Putative ammonium transporter 2 (amt-2), found in Caenorhabditis elegans.